The primary structure comprises 608 residues: RAS guanyl-releasing protein 2 (608 aa).

An N-terminal Ras-GEF domain is found at 4–126 (TLDLDKGCTV…SLIDIENVPT (123 aa)). 3 positions are modified to phosphoserine: Ser116, Ser117, and Ser147. Residues 154 to 387 (EPLELAAHLT…YQLSLQREPR (234 aa)) enclose the Ras-GEF domain. The segment at 382-407 (LQREPRSKSSPTSPTTCTPPPRPPVL) is disordered. 2 EF-hand domains span residues 426-461 (HIEK…FPYL) and 463-490 (AFGD…SSSM). Ca(2+)-binding residues include Asp439, Asp441, Asp443, His445, Glu450, Asp468, Asn470, Asp472, Cys474, and Glu479. Residues 498 to 548 (VHNFHESNSLRPVACRHCKALILGIYKQGLKCRACGVNCHKQCKDRLSVEC) form a Phorbol-ester/DAG-type zinc finger. Ser554 and Ser575 each carry phosphoserine. The segment at 556 to 591 (SLEGSAPSPSPTHTHHRAFSFSLPRPGRRGSRPPEI) is disordered.

Belongs to the RASGRP family. Forms a signaling complex with RAP1 and BRAF. Interacts with RAP1. Interacts with F-actin.

It is found in the cytoplasm. Its subcellular location is the cytosol. The protein resides in the cell membrane. It localises to the synapse. The protein localises to the synaptosome. It is found in the cell projection. Its subcellular location is the ruffle membrane. Functionally, functions as a calcium- and DAG-regulated nucleotide exchange factor specifically activating Rap through the exchange of bound GDP for GTP. May also activate other GTPases such as RRAS, RRAS2, NRAS, KRAS but not HRAS. Functions in aggregation of platelets and adhesion of T-lymphocytes and neutrophils probably through inside-out integrin activation. May function in the muscarinic acetylcholine receptor M1/CHRM1 signaling pathway. The protein is RAS guanyl-releasing protein 2 (RASGRP2) of Bos taurus (Bovine).